A 245-amino-acid polypeptide reads, in one-letter code: DNA repair protein RecO (245 aa).

It belongs to the RecO family.

Involved in DNA repair and RecF pathway recombination. The chain is DNA repair protein RecO from Porphyromonas gingivalis (strain ATCC 33277 / DSM 20709 / CIP 103683 / JCM 12257 / NCTC 11834 / 2561).